The following is a 217-amino-acid chain: Elongation factor Ts (217 aa).

The involved in Mg(2+) ion dislocation from EF-Tu stretch occupies residues 82-85 (TDFV).

It belongs to the EF-Ts family.

It localises to the cytoplasm. Its function is as follows. Associates with the EF-Tu.GDP complex and induces the exchange of GDP to GTP. It remains bound to the aminoacyl-tRNA.EF-Tu.GTP complex up to the GTP hydrolysis stage on the ribosome. The protein is Elongation factor Ts of Desulforamulus reducens (strain ATCC BAA-1160 / DSM 100696 / MI-1) (Desulfotomaculum reducens).